The following is a 90-amino-acid chain: DNA-binding protein HU-alpha (90 aa).

Belongs to the bacterial histone-like protein family. Heterodimer of an alpha and a beta chain.

In terms of biological role, histone-like DNA-binding protein which is capable of wrapping DNA to stabilize it, and thus to prevent its denaturation under extreme environmental conditions. In Vibrio cholerae serotype O1 (strain ATCC 39315 / El Tor Inaba N16961), this protein is DNA-binding protein HU-alpha (hupA).